We begin with the raw amino-acid sequence, 77 residues long: Acyl carrier protein (77 aa).

Residues 2-77 form the Carrier domain; that stretch reads SDVAKRVKEI…DAIDYITEHT (76 aa). Ser-37 bears the O-(pantetheine 4'-phosphoryl)serine mark.

The protein belongs to the acyl carrier protein (ACP) family. 4'-phosphopantetheine is transferred from CoA to a specific serine of apo-ACP by AcpS. This modification is essential for activity because fatty acids are bound in thioester linkage to the sulfhydryl of the prosthetic group.

It is found in the cytoplasm. It participates in lipid metabolism; fatty acid biosynthesis. In terms of biological role, carrier of the growing fatty acid chain in fatty acid biosynthesis. In Trichlorobacter lovleyi (strain ATCC BAA-1151 / DSM 17278 / SZ) (Geobacter lovleyi), this protein is Acyl carrier protein.